The chain runs to 345 residues: Baculoviral IAP repeat-containing protein 7-B (345 aa).

BIR repeat units follow at residues 46–112 (RQRS…PFLQ) and 154–219 (RLGS…DFLL). The Zn(2+) site is built by Cys188, Cys191, His208, and Cys215. At Ser237 the chain carries Phosphoserine. Ser241 carries the post-translational modification Phosphoserine; by MAPK1. Phosphoserine is present on Ser253. Ser257 is modified (phosphoserine; by MAPK1). The tract at residues 258-286 (TESVSVPRAPTPGERSEPPKVSGPPLSTE) is disordered. The RING-type zinc finger occupies 298-333 (CKVCMDKDVSMLFVPCGHLVVCTECAPNLRHCPICR).

This sequence belongs to the IAP family. Auto-ubiquitinated, and degraded in a 2-step mechanism; a caspase-independent first step and a caspase-dependent second step. Post-translationally, phosphorylated via MAPK-dependent and CDK-dependent pathways during oocyte maturation. Phosphorylation does not appear to affect caspase inhibition or autoubiquitination activity.

It localises to the cytoplasm. It carries out the reaction S-ubiquitinyl-[E2 ubiquitin-conjugating enzyme]-L-cysteine + [acceptor protein]-L-lysine = [E2 ubiquitin-conjugating enzyme]-L-cysteine + N(6)-ubiquitinyl-[acceptor protein]-L-lysine.. Its function is as follows. Weak apoptotic suppressor. Has E3 ubiquitin-protein ligase activity. Weak inhibitor of caspase activity. The chain is Baculoviral IAP repeat-containing protein 7-B (birc7-b) from Xenopus laevis (African clawed frog).